Consider the following 86-residue polypeptide: Large ribosomal subunit protein bL31B (86 aa).

The protein belongs to the bacterial ribosomal protein bL31 family. Type B subfamily. In terms of assembly, part of the 50S ribosomal subunit.

The protein is Large ribosomal subunit protein bL31B of Yersinia pseudotuberculosis serotype O:1b (strain IP 31758).